The following is a 671-amino-acid chain: Probable potassium transport system protein Kup 2 (671 aa).

12 helical membrane-spanning segments follow: residues 18–38, 60–80, 103–123, 149–169, 173–193, 218–238, 252–272, 292–312, 343–363, 373–393, 402–422, and 424–444; these read GFLI…LYAM, VSLV…LIAL, WLIV…ALTP, VTTL…ASLV, FGPI…INSF, AGFF…ALYS, WPFV…WLLA, MVIY…QALI, LYIP…VLYF, YSLA…YFLI, IAFI…ASLV, and FING…VMFI.

Belongs to the HAK/KUP transporter (TC 2.A.72) family.

It is found in the cell membrane. It carries out the reaction K(+)(in) + H(+)(in) = K(+)(out) + H(+)(out). Transport of potassium into the cell. Likely operates as a K(+):H(+) symporter. In Lactococcus lactis subsp. cremoris (strain MG1363), this protein is Probable potassium transport system protein Kup 2.